A 350-amino-acid chain; its full sequence is Methylthioribose-1-phosphate isomerase (350 aa).

Substrate is bound by residues 47–49, Arg-90, and Gln-197; that span reads RGA. Asp-238 serves as the catalytic Proton donor. Substrate is bound at residue 248–249; it reads NK.

The protein belongs to the eIF-2B alpha/beta/delta subunits family. MtnA subfamily.

The catalysed reaction is 5-(methylsulfanyl)-alpha-D-ribose 1-phosphate = 5-(methylsulfanyl)-D-ribulose 1-phosphate. It participates in amino-acid biosynthesis; L-methionine biosynthesis via salvage pathway; L-methionine from S-methyl-5-thio-alpha-D-ribose 1-phosphate: step 1/6. Functionally, catalyzes the interconversion of methylthioribose-1-phosphate (MTR-1-P) into methylthioribulose-1-phosphate (MTRu-1-P). This chain is Methylthioribose-1-phosphate isomerase, found in Nitratidesulfovibrio vulgaris (strain DP4) (Desulfovibrio vulgaris).